The sequence spans 782 residues: Translation initiation factor IF-2 (782 aa).

The disordered stretch occupies residues 47 to 196; sequence DNAIDGTNKK…TPPKPKELPE (150 aa). Over residues 53 to 65 the composition is skewed to basic and acidic residues; that stretch reads TNKKAEAPKKETT. The segment covering 66-81 has biased composition (polar residues); it reads SNENGNSKGPNKPNMT. Composition is skewed to low complexity over residues 82-93 and 118-170; these read NSNEKSNKPNNP and NTSK…NNKG. The region spanning 283-452 is the tr-type G domain; that stretch reads ERPPVVTIMG…LLVSEVEELK (170 aa). Positions 292-299 are G1; that stretch reads GHVDHGKT. 292–299 is a binding site for GTP; that stretch reads GHVDHGKT. The tract at residues 317-321 is G2; sequence GITQH. A G3 region spans residues 338 to 341; the sequence is DTPG. Residues 338-342 and 392-395 each bind GTP; these read DTPGH and NKID. A G4 region spans residues 392–395; that stretch reads NKID. The tract at residues 428-430 is G5; that stretch reads SAK.

It belongs to the TRAFAC class translation factor GTPase superfamily. Classic translation factor GTPase family. IF-2 subfamily.

Its subcellular location is the cytoplasm. Its function is as follows. One of the essential components for the initiation of protein synthesis. Protects formylmethionyl-tRNA from spontaneous hydrolysis and promotes its binding to the 30S ribosomal subunits. Also involved in the hydrolysis of GTP during the formation of the 70S ribosomal complex. This chain is Translation initiation factor IF-2, found in Listeria monocytogenes serotype 4b (strain CLIP80459).